Consider the following 419-residue polypeptide: Gamma-glutamyl phosphate reductase (419 aa).

The protein belongs to the gamma-glutamyl phosphate reductase family.

Its subcellular location is the cytoplasm. It carries out the reaction L-glutamate 5-semialdehyde + phosphate + NADP(+) = L-glutamyl 5-phosphate + NADPH + H(+). It participates in amino-acid biosynthesis; L-proline biosynthesis; L-glutamate 5-semialdehyde from L-glutamate: step 2/2. Its function is as follows. Catalyzes the NADPH-dependent reduction of L-glutamate 5-phosphate into L-glutamate 5-semialdehyde and phosphate. The product spontaneously undergoes cyclization to form 1-pyrroline-5-carboxylate. This is Gamma-glutamyl phosphate reductase from Caldicellulosiruptor saccharolyticus (strain ATCC 43494 / DSM 8903 / Tp8T 6331).